The sequence spans 344 residues: uncharacterized protein (344 aa).

This is an uncharacterized protein from Aquifex aeolicus (strain VF5).